Consider the following 239-residue polypeptide: 7-cyano-7-deazaguanine synthase (239 aa).

Residue 12–22 (FSGGQDSATCL) participates in ATP binding. 4 residues coordinate Zn(2+): C200, C215, C218, and C221.

It belongs to the QueC family. Requires Zn(2+) as cofactor.

It carries out the reaction 7-carboxy-7-deazaguanine + NH4(+) + ATP = 7-cyano-7-deazaguanine + ADP + phosphate + H2O + H(+). Its pathway is purine metabolism; 7-cyano-7-deazaguanine biosynthesis. Its function is as follows. Catalyzes the ATP-dependent conversion of 7-carboxy-7-deazaguanine (CDG) to 7-cyano-7-deazaguanine (preQ(0)). The sequence is that of 7-cyano-7-deazaguanine synthase from Hyphomonas neptunium (strain ATCC 15444).